Consider the following 181-residue polypeptide: Small acidic protein (181 aa).

The tract at residues methionine 1 to serine 181 is disordered. Lysine 13 is covalently cross-linked (Glycyl lysine isopeptide (Lys-Gly) (interchain with G-Cter in SUMO2)). 2 positions are modified to phosphoserine: serine 15 and serine 17. Basic and acidic residues predominate over residues glycine 48–glutamate 78. A Glycyl lysine isopeptide (Lys-Gly) (interchain with G-Cter in SUMO2) cross-link involves residue lysine 62. Residue serine 63 is modified to Phosphoserine. Residue lysine 75 forms a Glycyl lysine isopeptide (Lys-Gly) (interchain with G-Cter in SUMO2) linkage. Residues serine 87, serine 125, and serine 145 each carry the phosphoserine modification. The span at glutamate 106 to glutamate 147 shows a compositional bias: acidic residues. Positions alanine 151 to serine 169 are enriched in basic and acidic residues. N6-acetyllysine is present on residues lysine 172 and lysine 177.

The protein belongs to the SMAP family.

The chain is Small acidic protein (SMAP) from Bos taurus (Bovine).